The primary structure comprises 78 residues: Small ribosomal subunit protein bS18 (78 aa).

This sequence belongs to the bacterial ribosomal protein bS18 family. Part of the 30S ribosomal subunit. Forms a tight heterodimer with protein bS6.

Binds as a heterodimer with protein bS6 to the central domain of the 16S rRNA, where it helps stabilize the platform of the 30S subunit. The sequence is that of Small ribosomal subunit protein bS18 from Geobacillus sp. (strain WCH70).